Consider the following 611-residue polypeptide: Elongation factor 4 1 (611 aa).

Residues 11–193 (QHIRNFSIVA…QIVHKIPAPQ (183 aa)) enclose the tr-type G domain. Residues 23 to 28 (DHGKST) and 140 to 143 (NKID) each bind GTP.

Belongs to the TRAFAC class translation factor GTPase superfamily. Classic translation factor GTPase family. LepA subfamily.

Its subcellular location is the cell membrane. It carries out the reaction GTP + H2O = GDP + phosphate + H(+). Its function is as follows. Required for accurate and efficient protein synthesis under certain stress conditions. May act as a fidelity factor of the translation reaction, by catalyzing a one-codon backward translocation of tRNAs on improperly translocated ribosomes. Back-translocation proceeds from a post-translocation (POST) complex to a pre-translocation (PRE) complex, thus giving elongation factor G a second chance to translocate the tRNAs correctly. Binds to ribosomes in a GTP-dependent manner. This chain is Elongation factor 4 1, found in Lactiplantibacillus plantarum (strain ATCC BAA-793 / NCIMB 8826 / WCFS1) (Lactobacillus plantarum).